Reading from the N-terminus, the 101-residue chain is Large ribosomal subunit protein uL24 (101 aa).

Belongs to the universal ribosomal protein uL24 family. As to quaternary structure, part of the 50S ribosomal subunit.

In terms of biological role, one of two assembly initiator proteins, it binds directly to the 5'-end of the 23S rRNA, where it nucleates assembly of the 50S subunit. One of the proteins that surrounds the polypeptide exit tunnel on the outside of the subunit. The chain is Large ribosomal subunit protein uL24 from Borrelia garinii subsp. bavariensis (strain ATCC BAA-2496 / DSM 23469 / PBi) (Borreliella bavariensis).